The primary structure comprises 357 residues: (4E)-oxalomesaconate Delta-isomerase (357 aa).

It belongs to the PrpF family.

It carries out the reaction (1E)-4-oxobut-1-ene-1,2,4-tricarboxylate = (3Z)-2-oxo-4-carboxy-3-hexenedioate. The protein operates within secondary metabolite metabolism; lignin degradation. Its function is as follows. Contributes to the degradation of lignin at the level of the protocatechuate 4,5-cleavage pathway. Catalyzes the isomerization of the double bond between C4 and C5 in (4E)-oxalomesaconate (OMA) to (3Z)-2-keto-4-carboxy-3-hexenedioate (KCH), where the double bond has migrated between C3 and C4 via a 1,3-allylic isomerization. The polypeptide is (4E)-oxalomesaconate Delta-isomerase (Novosphingobium sp. (strain KA1) (Sphingomonas sp. (strain KA1))).